Reading from the N-terminus, the 257-residue chain is Imidazole glycerol phosphate synthase subunit HisF (257 aa).

Residues Asp-11 and Asp-130 contribute to the active site.

The protein belongs to the HisA/HisF family. In terms of assembly, heterodimer of HisH and HisF.

The protein resides in the cytoplasm. It carries out the reaction 5-[(5-phospho-1-deoxy-D-ribulos-1-ylimino)methylamino]-1-(5-phospho-beta-D-ribosyl)imidazole-4-carboxamide + L-glutamine = D-erythro-1-(imidazol-4-yl)glycerol 3-phosphate + 5-amino-1-(5-phospho-beta-D-ribosyl)imidazole-4-carboxamide + L-glutamate + H(+). The protein operates within amino-acid biosynthesis; L-histidine biosynthesis; L-histidine from 5-phospho-alpha-D-ribose 1-diphosphate: step 5/9. Its function is as follows. IGPS catalyzes the conversion of PRFAR and glutamine to IGP, AICAR and glutamate. The HisF subunit catalyzes the cyclization activity that produces IGP and AICAR from PRFAR using the ammonia provided by the HisH subunit. This Shewanella sp. (strain MR-7) protein is Imidazole glycerol phosphate synthase subunit HisF.